Consider the following 349-residue polypeptide: Holliday junction branch migration complex subunit RuvB (349 aa).

The segment covering 1–15 (MSDDYRETDPTRQPE) has biased composition (basic and acidic residues). Residues 1–25 (MSDDYRETDPTRQPEDMGEGSLRPE) form a disordered region. Positions 1–183 (MSDDYRETDP…FGIPLRLVFY (183 aa)) are large ATPase domain (RuvB-L). ATP is bound by residues leucine 22, arginine 23, glycine 64, lysine 67, threonine 68, threonine 69, 130–132 (EDF), arginine 173, tyrosine 183, and arginine 220. Position 68 (threonine 68) interacts with Mg(2+). The segment at 184–254 (TPEELRAIVS…LADAALGRLE (71 aa)) is small ATPAse domain (RuvB-S). The head domain (RuvB-H) stretch occupies residues 257 to 349 (ERGLDAMDRR…SSLEQDDSAP (93 aa)). DNA is bound by residues arginine 293, arginine 312, and arginine 317.

The protein belongs to the RuvB family. As to quaternary structure, homohexamer. Forms an RuvA(8)-RuvB(12)-Holliday junction (HJ) complex. HJ DNA is sandwiched between 2 RuvA tetramers; dsDNA enters through RuvA and exits via RuvB. An RuvB hexamer assembles on each DNA strand where it exits the tetramer. Each RuvB hexamer is contacted by two RuvA subunits (via domain III) on 2 adjacent RuvB subunits; this complex drives branch migration. In the full resolvosome a probable DNA-RuvA(4)-RuvB(12)-RuvC(2) complex forms which resolves the HJ.

Its subcellular location is the cytoplasm. The catalysed reaction is ATP + H2O = ADP + phosphate + H(+). In terms of biological role, the RuvA-RuvB-RuvC complex processes Holliday junction (HJ) DNA during genetic recombination and DNA repair, while the RuvA-RuvB complex plays an important role in the rescue of blocked DNA replication forks via replication fork reversal (RFR). RuvA specifically binds to HJ cruciform DNA, conferring on it an open structure. The RuvB hexamer acts as an ATP-dependent pump, pulling dsDNA into and through the RuvAB complex. RuvB forms 2 homohexamers on either side of HJ DNA bound by 1 or 2 RuvA tetramers; 4 subunits per hexamer contact DNA at a time. Coordinated motions by a converter formed by DNA-disengaged RuvB subunits stimulates ATP hydrolysis and nucleotide exchange. Immobilization of the converter enables RuvB to convert the ATP-contained energy into a lever motion, pulling 2 nucleotides of DNA out of the RuvA tetramer per ATP hydrolyzed, thus driving DNA branch migration. The RuvB motors rotate together with the DNA substrate, which together with the progressing nucleotide cycle form the mechanistic basis for DNA recombination by continuous HJ branch migration. Branch migration allows RuvC to scan DNA until it finds its consensus sequence, where it cleaves and resolves cruciform DNA. This chain is Holliday junction branch migration complex subunit RuvB, found in Gluconobacter oxydans (strain 621H) (Gluconobacter suboxydans).